The chain runs to 502 residues: Probable cytosol aminopeptidase (502 aa).

Residues K265 and D270 each contribute to the Mn(2+) site. K277 is an active-site residue. Mn(2+) contacts are provided by D288, D347, and E349. R351 is an active-site residue.

The protein belongs to the peptidase M17 family. Mn(2+) serves as cofactor.

The protein localises to the cytoplasm. The catalysed reaction is Release of an N-terminal amino acid, Xaa-|-Yaa-, in which Xaa is preferably Leu, but may be other amino acids including Pro although not Arg or Lys, and Yaa may be Pro. Amino acid amides and methyl esters are also readily hydrolyzed, but rates on arylamides are exceedingly low.. The enzyme catalyses Release of an N-terminal amino acid, preferentially leucine, but not glutamic or aspartic acids.. In terms of biological role, presumably involved in the processing and regular turnover of intracellular proteins. Catalyzes the removal of unsubstituted N-terminal amino acids from various peptides. This Rickettsia bellii (strain RML369-C) protein is Probable cytosol aminopeptidase.